We begin with the raw amino-acid sequence, 257 residues long: tRNA uridine(34) hydroxylase (257 aa).

One can recognise a Rhodanese domain in the interval 128-222; it reads NGRRLVMLDA…YFEQVGGEGY (95 aa). The Cysteine persulfide intermediate role is filled by Cys182.

It belongs to the TrhO family.

It carries out the reaction uridine(34) in tRNA + AH2 + O2 = 5-hydroxyuridine(34) in tRNA + A + H2O. In terms of biological role, catalyzes oxygen-dependent 5-hydroxyuridine (ho5U) modification at position 34 in tRNAs. In Xylella fastidiosa (strain M23), this protein is tRNA uridine(34) hydroxylase.